The primary structure comprises 333 residues: Forkhead box protein unc-130 (333 aa).

Residues methionine 1–alanine 126 are disordered. A compositionally biased stretch (basic and acidic residues) spans proline 14–proline 24. Over residues arginine 37–serine 50 the composition is skewed to polar residues. Basic and acidic residues predominate over residues leucine 52–arginine 62. Acidic residues predominate over residues serine 98–aspartate 110. The fork-head DNA-binding region spans lysine 127 to lysine 221. Residues alanine 304–alanine 333 are disordered. Over residues serine 307 to alanine 333 the composition is skewed to low complexity.

As to expression, expressed in ventral body wall muscle. Expressed in the structural cells and two neurons of each ray in the male tail.

The protein resides in the nucleus. In terms of biological role, probable transcription factor. Binds to DNA sequence motif 5'-CTGTTTCA-3'. Required for the migration of distal tip cells (DTC) and axonal growth-cones along the dorsal-ventral axis of the body wall, acting by cell autonomous repression of unc-129/TGF-beta expression in ventral body muscle during embyogenesis. Binds to the promoter region of the unc-129 gene. Plays a role in dorsal-ventral patterning and fate specification of the postembryonic mesoderm. Involved in male tail morphogenesis and in embryogenesis. Plays a role in the development of sensory neurons and is required to repress AWA fate and promote ASG fate in the ASG chemosensory neurons. Regulates expression of a class of small RNAs, known as 21U-RNAs. This is Forkhead box protein unc-130 from Caenorhabditis elegans.